A 226-amino-acid chain; its full sequence is Protein DEHYDRATION-INDUCED 19 (226 aa).

A disordered region spans residues 158–208; it reads FPTSDTEETSKPPISIPDDASVIKETPAQPWDSSIDSSLTREEREQKRKQA. Residues 196 to 205 show a composition bias toward basic and acidic residues; that stretch reads LTREEREQKR.

The protein belongs to the Di19 family.

This Oryza sativa subsp. japonica (Rice) protein is Protein DEHYDRATION-INDUCED 19 (DI19-1).